The chain runs to 313 residues: Coproporphyrin III ferrochelatase (313 aa).

Fe(2+) is bound by residues His191 and Glu270.

It belongs to the ferrochelatase family.

It localises to the cytoplasm. The catalysed reaction is Fe-coproporphyrin III + 2 H(+) = coproporphyrin III + Fe(2+). It participates in porphyrin-containing compound metabolism; protoheme biosynthesis. Functionally, involved in coproporphyrin-dependent heme b biosynthesis. Catalyzes the insertion of ferrous iron into coproporphyrin III to form Fe-coproporphyrin III. The chain is Coproporphyrin III ferrochelatase from Enterococcus faecalis (strain ATCC 700802 / V583).